The chain runs to 202 residues: Small ribosomal subunit protein uS4c (202 aa).

The S4 RNA-binding domain maps to 90–153 (MRLDNIIFRL…KSEAIISKNI (64 aa)).

It belongs to the universal ribosomal protein uS4 family. As to quaternary structure, part of the 30S ribosomal subunit. Contacts protein S5. The interaction surface between S4 and S5 is involved in control of translational fidelity.

The protein resides in the plastid. The protein localises to the chloroplast. Functionally, one of the primary rRNA binding proteins, it binds directly to 16S rRNA where it nucleates assembly of the body of the 30S subunit. With S5 and S12 plays an important role in translational accuracy. The sequence is that of Small ribosomal subunit protein uS4c (rps4) from Leucodon sciuroides (Moss).